A 251-amino-acid chain; its full sequence is 1-(5-phosphoribosyl)-5-[(5-phosphoribosylamino)methylideneamino] imidazole-4-carboxamide isomerase (251 aa).

The active-site Proton acceptor is the D7. Catalysis depends on D131, which acts as the Proton donor.

It belongs to the HisA/HisF family.

The protein resides in the cytoplasm. The enzyme catalyses 1-(5-phospho-beta-D-ribosyl)-5-[(5-phospho-beta-D-ribosylamino)methylideneamino]imidazole-4-carboxamide = 5-[(5-phospho-1-deoxy-D-ribulos-1-ylimino)methylamino]-1-(5-phospho-beta-D-ribosyl)imidazole-4-carboxamide. Its pathway is amino-acid biosynthesis; L-histidine biosynthesis; L-histidine from 5-phospho-alpha-D-ribose 1-diphosphate: step 4/9. The sequence is that of 1-(5-phosphoribosyl)-5-[(5-phosphoribosylamino)methylideneamino] imidazole-4-carboxamide isomerase from Blochmanniella floridana.